The following is a 127-amino-acid chain: NADPH-dependent 7-cyano-7-deazaguanine reductase (127 aa).

Cys40 (thioimide intermediate) is an active-site residue. Asp47 serves as the catalytic Proton donor. Substrate-binding positions include 62-64 (VEL) and 81-82 (HE).

Belongs to the GTP cyclohydrolase I family. QueF type 1 subfamily.

Its subcellular location is the cytoplasm. The enzyme catalyses 7-aminomethyl-7-carbaguanine + 2 NADP(+) = 7-cyano-7-deazaguanine + 2 NADPH + 3 H(+). The protein operates within tRNA modification; tRNA-queuosine biosynthesis. Its function is as follows. Catalyzes the NADPH-dependent reduction of 7-cyano-7-deazaguanine (preQ0) to 7-aminomethyl-7-deazaguanine (preQ1). The sequence is that of NADPH-dependent 7-cyano-7-deazaguanine reductase from Campylobacter jejuni subsp. jejuni serotype O:6 (strain 81116 / NCTC 11828).